The primary structure comprises 233 residues: Large ribosomal subunit protein uL1 (233 aa).

The protein belongs to the universal ribosomal protein uL1 family. Part of the 50S ribosomal subunit.

In terms of biological role, binds directly to 23S rRNA. The L1 stalk is quite mobile in the ribosome, and is involved in E site tRNA release. Its function is as follows. Protein L1 is also a translational repressor protein, it controls the translation of the L11 operon by binding to its mRNA. The sequence is that of Large ribosomal subunit protein uL1 from Shewanella putrefaciens (strain CN-32 / ATCC BAA-453).